The chain runs to 572 residues: EVEEPKTKISASTAEASSSRISSAKMTADGTIKLGDQSPLKQSEKDHPVSWDFKLVQSLRNEYADERYISRSAMLDQEMNVVNLLELIDNLQRLGLSYHFEDKIRSILSGIYNTIKMRNPEGLYATALEFRLRRQHGFYVPQEIFESFKDENGDFNHSLCEDLKGLLYLYEASYLEKENESNLEMAREFTAKHLKKILKEKRIDQELEALVQHALELPLHWRMMRLEARWFIDIYEARSDRNPILLELAKLDFNIVQAIHQNDLECTLRWWSSTGLAEKLSFARDIMVENFFWTVGTISDPQHGNARRLLTKVAALVTAIDDVYDQYGTEDELELFTSVVERWDVNSIDQLPDYMKICFLALFNFVNEMAYDALKEEGVNIIPYLRKAWADLCKAYLQEAKWFFSGHIPTLQQYLNNAWTSISAPLVVVHAYFCVDYPINKDHVEYLEKCHKIIRCSSMIIRLANDLGTSPESEVLKSADVPKSIQCYVKETGACEEKAREYLRFLIIEAWKQMNEAQTVDSPFSSTFKGFAVNVARMGQCMYQHGDGHAHQNSEPRDRILSLLFEPISSFA.

A chloroplast-targeting transit peptide spans 1–27 (EVEEPKTKISASTAEASSSRISSAKMT). Residues 1–45 (EVEEPKTKISASTAEASSSRISSAKMTADGTIKLGDQSPLKQSEK) are disordered. Residues 8–28 (KISASTAEASSSRISSAKMTA) are compositionally biased toward low complexity. The (2E)-geranyl diphosphate site is built by R284, D321, D325, R462, and N465. Residues D321 and D325 each contribute to the Mg(2+) site. The DDXXD motif signature appears at 321 to 325 (DDVYD). Residues N465, T469, and S473 each coordinate Mg(2+).

Belongs to the terpene synthase family. Tpsb subfamily. In terms of assembly, monomer. The cofactor is Mg(2+). Requires Mn(2+) as cofactor. In terms of tissue distribution, expressed in flowers and fruits.

It is found in the plastid. The protein localises to the chloroplast. It carries out the reaction (2E)-geranyl diphosphate = beta-myrcene + diphosphate. The catalysed reaction is (2E)-geranyl diphosphate + H2O = linalool + diphosphate. The enzyme catalyses (2E)-geranyl diphosphate = (Z)-beta-ocimene + diphosphate. It catalyses the reaction (2E)-geranyl diphosphate = (E)-beta-ocimene + diphosphate. The protein operates within secondary metabolite biosynthesis; terpenoid biosynthesis. Monoterpene synthase (mono-TPS) involved in the biosynthesis of monoterpenes natural products, constituent of coffee beverage aroma. Catalyzes the conversion of (2E)-geranyl diphosphate (GPP) into linalool and beta-myrcene, and, as minor products, cis-ocimene and trans-ocimene. Not able to use geranylgeranyl pyrophosphate (GGPP) and farnesyl pyrophosphate (FPP) as substrates. This chain is Linalool synthase TPS2, chloroplastic, found in Coffea arabica (Arabian coffee).